Here is a 403-residue protein sequence, read N- to C-terminus: S-adenosylmethionine synthase (403 aa).

His17 contributes to the ATP binding site. Asp19 lines the Mg(2+) pocket. Glu45 is a binding site for K(+). The L-methionine site is built by Glu58 and Gln104. The tract at residues 104 to 114 (QSSDIAQGVNT) is flexible loop. ATP is bound by residues 179 to 181 (DGK), 250 to 251 (KF), Asp259, 265 to 266 (RK), Ala282, and Lys286. L-methionine is bound at residue Asp259. Lys290 provides a ligand contact to L-methionine.

It belongs to the AdoMet synthase family. Homotetramer; dimer of dimers. Mg(2+) is required as a cofactor. The cofactor is K(+).

The protein localises to the cytoplasm. The enzyme catalyses L-methionine + ATP + H2O = S-adenosyl-L-methionine + phosphate + diphosphate. It functions in the pathway amino-acid biosynthesis; S-adenosyl-L-methionine biosynthesis; S-adenosyl-L-methionine from L-methionine: step 1/1. Its function is as follows. Catalyzes the formation of S-adenosylmethionine (AdoMet) from methionine and ATP. The overall synthetic reaction is composed of two sequential steps, AdoMet formation and the subsequent tripolyphosphate hydrolysis which occurs prior to release of AdoMet from the enzyme. The chain is S-adenosylmethionine synthase from Mycobacterium leprae (strain Br4923).